We begin with the raw amino-acid sequence, 517 residues long: Xyloglucan galactosyltransferase XLT2 (517 aa).

The disordered stretch occupies residues 1 to 31 (MLPVSNPSSPEHLLKKSRTPDSTTSIDRKNS). The Cytoplasmic segment spans residues 1-49 (MLPVSNPSSPEHLLKKSRTPDSTTSIDRKNSFNSLHSVGNRSSYIAASR). Residues 20–31 (PDSTTSIDRKNS) show a composition bias toward polar residues. The chain crosses the membrane as a helical; Signal-anchor for type II membrane protein span at residues 50 to 70 (SHCTWLILSLLSLQLILFLTL). Over 71 to 517 (RSIPFPHRHI…KEQEKWYKWR (447 aa)) the chain is Lumenal. Asn250, Asn288, Asn377, and Asn449 each carry an N-linked (GlcNAc...) asparagine glycan.

The protein belongs to the glycosyltransferase 47 family. As to quaternary structure, interacts with CSLC4, FUT1, XXT2 and XXT5. In terms of tissue distribution, expressed in roots, hypocotyls, cotyledons, leaves, stems and flowers.

Its subcellular location is the golgi apparatus membrane. Functions in xyloglucan synthesis by adding side chains to the xylosylated glucan backbone. Involved in galactosylating hemicellulose xyloglucan (XyG) at the second position of the XXXG motif to form XLXG. Associates with other xyloglucan-synthesizing enzymes to form multiprotein complexes for xyloglucan synthesis in the Golgi. In Arabidopsis thaliana (Mouse-ear cress), this protein is Xyloglucan galactosyltransferase XLT2.